A 529-amino-acid polypeptide reads, in one-letter code: GMP synthase [glutamine-hydrolyzing] (529 aa).

The 190-residue stretch at 17-206 folds into the Glutamine amidotransferase type-1 domain; that stretch reads TILVLDFGSQ…AIDICQASNN (190 aa). C93 (nucleophile) is an active-site residue. Residues H180 and E182 contribute to the active site. In terms of domain architecture, GMPS ATP-PPase spans 207 to 404; it reads WTMENFIDTE…MGVPHDLVWR (198 aa). Residue 235–241 participates in ATP binding; that stretch reads SGGVDST. XMP contacts are provided by R308, D466, K521, and E527.

Homodimer. The cofactor is Mg(2+).

It localises to the cytoplasm. Its subcellular location is the cytosol. It catalyses the reaction XMP + L-glutamine + ATP + H2O = GMP + L-glutamate + AMP + diphosphate + 2 H(+). Its pathway is purine metabolism; GMP biosynthesis; GMP from XMP (L-Gln route): step 1/1. Functionally, catalyzes the conversion of xanthine monophosphate (XMP) to GMP in the presence of glutamine and ATP through an adenyl-XMP intermediate. The sequence is that of GMP synthase [glutamine-hydrolyzing] (GUA1) from Debaryomyces hansenii (strain ATCC 36239 / CBS 767 / BCRC 21394 / JCM 1990 / NBRC 0083 / IGC 2968) (Yeast).